A 496-amino-acid chain; its full sequence is E1B 55 kDa protein (496 aa).

The segment at 1–74 (MERRNPSERG…EPESRPGPSG (74 aa)) is disordered. Over residues 45-61 (GGAAAAAGGSQAAAAGA) the composition is skewed to low complexity. Serine 490 and serine 491 each carry phosphoserine. At threonine 495 the chain carries Phosphothreonine.

Belongs to the adenoviridae E1B 55 kDa protein family. Interacts with host PML-4 and PML-5; this interaction promotes efficient subnuclear targeting of E1B-55K to PML nuclear bodies. Interacts with E4-ORF3 protein. Interacts with E4-ORF6 protein. Post-translationally, phosphorylation at the C-terminus affects the subcellular location.

It is found in the host nucleus. Its subcellular location is the host cytoplasm. Functionally, plays a major role to prevent cellular inhibition of viral genome replication. Assembles an SCF-like E3 ubiquitin ligase complex based on the cellular proteins ELOB, ELOC, CUL5 and RBX1, in cooperation with viral E4orf6. This viral RING-type ligase ubiquitinates cellular substrates and targets them to proteasomal degradation: TP53/p53, LIG4, MRE11-RAD50-NBS1 (MRN) complex, ITGA3, DAXX and BLM. E1B-55K probably acts as the substrate-specific adapter of the SCF-like E3 ubiquitin ligase complex. Degradation of host TP53/p53 activity is essential for preventing E1A-induced TP53 accumulation that would otherwise lead to cell apoptosis and growth arrest. E1B-55K also inactivates TP53 transcription-factor activity by binding its transactivation domain. E1B-55K also functions as a SUMO1 E3 ligase for TP53 which causes the latter to be sequestered in promyelocytic leukemia (PML) nuclear bodies thereby contributing to maximal inhibition of TP53 function. This chain is E1B 55 kDa protein, found in Homo sapiens (Human).